The chain runs to 312 residues: Zygote arrest protein 1.L (312 aa).

2 disordered regions span residues 79–133 and 150–205; these read RDVG…VRFP and FQDK…DQTR. Composition is skewed to polar residues over residues 86–95 and 113–128; these read NPRQDASVQC and PQQS…SPTK. Positions 152 to 196 are enriched in basic and acidic residues; that stretch reads DKGENLSEKTEALRSEGSRGEGGRPEGKQEDGEIKEQTKMDKADQ. The segment at 214-297 adopts a 3CxxC-type zinc-finger fold; sequence KYGYYHCKDC…RQDLCGRCKG (84 aa).

Belongs to the ZAR1 family. As to expression, ovary.

It localises to the cytoplasm. It is found in the cytoplasmic ribonucleoprotein granule. MRNA-binding protein required for maternal mRNA storage, translation and degradation during oocyte maturation. Probably promotes formation of some phase-separated membraneless compartment that stores maternal mRNAs in oocytes: acts by undergoing liquid-liquid phase separation upon binding to maternal mRNAs. Binds to the 3'-UTR of maternal mRNAs in immature oocytes, inhibiting their translation. The sequence is that of Zygote arrest protein 1.L from Xenopus laevis (African clawed frog).